Reading from the N-terminus, the 311-residue chain is Aspartate carbamoyltransferase catalytic subunit (311 aa).

The carbamoyl phosphate site is built by Arg-55 and Thr-56. Lys-85 contacts L-aspartate. The carbamoyl phosphate site is built by Arg-106, His-135, and Gln-138. Arg-168 and Arg-230 together coordinate L-aspartate. 2 residues coordinate carbamoyl phosphate: Leu-268 and Pro-269.

The protein belongs to the aspartate/ornithine carbamoyltransferase superfamily. ATCase family. Heterododecamer (2C3:3R2) of six catalytic PyrB chains organized as two trimers (C3), and six regulatory PyrI chains organized as three dimers (R2).

It catalyses the reaction carbamoyl phosphate + L-aspartate = N-carbamoyl-L-aspartate + phosphate + H(+). The protein operates within pyrimidine metabolism; UMP biosynthesis via de novo pathway; (S)-dihydroorotate from bicarbonate: step 2/3. Its function is as follows. Catalyzes the condensation of carbamoyl phosphate and aspartate to form carbamoyl aspartate and inorganic phosphate, the committed step in the de novo pyrimidine nucleotide biosynthesis pathway. The chain is Aspartate carbamoyltransferase catalytic subunit from Cronobacter sakazakii (strain ATCC BAA-894) (Enterobacter sakazakii).